The sequence spans 244 residues: MKVSLFITCLADVFYPDVGRHTVELLERYGCEVEFPEQQTCCGQPAYNSGYHRDTKKVAKHMIETFARAEYVVSPSGSCVAMFHEYEELLKDEPVWQERAKKLVAKTYELSQFLVNVLKVKEVHSSLQAKATYHTSCHMTRLLGETQSPFDLLEKVEGLQLEELPNRETCCGFGGTFSVKMTPISEQMVDEKVRHIEETGADVLIGADCGCLMNIGGRIQRKGKPIKMMHLAEVLNHQERTREE.

Belongs to the LutA/YkgE family.

Its function is as follows. Is involved in L-lactate degradation and allows cells to grow with lactate as the sole carbon source. This is Lactate utilization protein A from Halalkalibacterium halodurans (strain ATCC BAA-125 / DSM 18197 / FERM 7344 / JCM 9153 / C-125) (Bacillus halodurans).